The following is a 490-amino-acid chain: Apocarotenoid-15,15'-oxygenase (490 aa).

A Fe cation-binding site is contributed by His-183. Ser-206 contacts substrate. His-238 provides a ligand contact to Fe cation. Phe-303 is a binding site for substrate. Fe cation contacts are provided by His-304 and His-484.

It belongs to the carotenoid oxygenase family. It depends on Fe(2+) as a cofactor.

It catalyses the reaction all-trans-8'-apo-beta-carotenal + O2 = (2E,4E,6E)-2,6-dimethylocta-2,4,6-trienedial + all-trans-retinal. Its function is as follows. Cleaves a number of carotenals and carotenols in the all-trans configuration at the 15-15' double bond producing retinal or retinol, respectively. Also shows activity toward lycopenals and the corresponding alcohols. Does not cleave beta-carotene or lycopene. The polypeptide is Apocarotenoid-15,15'-oxygenase (Synechocystis sp. (strain ATCC 27184 / PCC 6803 / Kazusa)).